The primary structure comprises 244 residues: Proteasome subunit alpha (244 aa).

This sequence belongs to the peptidase T1A family. As to quaternary structure, the 20S proteasome core is composed of 14 alpha and 14 beta subunits that assemble into four stacked heptameric rings, resulting in a barrel-shaped structure. The two inner rings, each composed of seven catalytic beta subunits, are sandwiched by two outer rings, each composed of seven alpha subunits. The catalytic chamber with the active sites is on the inside of the barrel. Has a gated structure, the ends of the cylinder being occluded by the N-termini of the alpha-subunits. Is capped by the proteasome-associated ATPase, ARC.

The protein resides in the cytoplasm. It functions in the pathway protein degradation; proteasomal Pup-dependent pathway. Its activity is regulated as follows. The formation of the proteasomal ATPase ARC-20S proteasome complex, likely via the docking of the C-termini of ARC into the intersubunit pockets in the alpha-rings, may trigger opening of the gate for substrate entry. Interconversion between the open-gate and close-gate conformations leads to a dynamic regulation of the 20S proteasome proteolysis activity. Component of the proteasome core, a large protease complex with broad specificity involved in protein degradation. This chain is Proteasome subunit alpha, found in Xylanimonas cellulosilytica (strain DSM 15894 / JCM 12276 / CECT 5975 / KCTC 9989 / LMG 20990 / NBRC 107835 / XIL07).